Consider the following 464-residue polypeptide: ATP synthase subunit beta (464 aa).

148–155 contacts ATP; that stretch reads GGAGVGKT.

Belongs to the ATPase alpha/beta chains family. F-type ATPases have 2 components, CF(1) - the catalytic core - and CF(0) - the membrane proton channel. CF(1) has five subunits: alpha(3), beta(3), gamma(1), delta(1), epsilon(1). CF(0) has three main subunits: a(1), b(2) and c(9-12). The alpha and beta chains form an alternating ring which encloses part of the gamma chain. CF(1) is attached to CF(0) by a central stalk formed by the gamma and epsilon chains, while a peripheral stalk is formed by the delta and b chains.

It localises to the cell inner membrane. It catalyses the reaction ATP + H2O + 4 H(+)(in) = ADP + phosphate + 5 H(+)(out). Its function is as follows. Produces ATP from ADP in the presence of a proton gradient across the membrane. The catalytic sites are hosted primarily by the beta subunits. The polypeptide is ATP synthase subunit beta (Acinetobacter baumannii (strain AB0057)).